Reading from the N-terminus, the 105-residue chain is Large ribosomal subunit protein uL24 (105 aa).

This sequence belongs to the universal ribosomal protein uL24 family. In terms of assembly, part of the 50S ribosomal subunit.

Its function is as follows. One of two assembly initiator proteins, it binds directly to the 5'-end of the 23S rRNA, where it nucleates assembly of the 50S subunit. Functionally, one of the proteins that surrounds the polypeptide exit tunnel on the outside of the subunit. The protein is Large ribosomal subunit protein uL24 of Dictyoglomus turgidum (strain DSM 6724 / Z-1310).